We begin with the raw amino-acid sequence, 96 residues long: Large ribosomal subunit protein bL28 (96 aa).

Positions 1-24 (MSRSCELTGKGVQSGHNVSHANNK) are disordered.

It belongs to the bacterial ribosomal protein bL28 family.

The sequence is that of Large ribosomal subunit protein bL28 from Sinorhizobium fredii (strain NBRC 101917 / NGR234).